Reading from the N-terminus, the 541-residue chain is Tetratricopeptide repeat protein 8 (541 aa).

One copy of the TPR 1 repeat lies at 14 to 47 (YFRRRKFQLCADLCTQMLEKSPYDQEPDPELPVH). Residues 118 to 137 (PITGFLRPSTQSGRPGTMEQ) are disordered. TPR repeat units lie at residues 251-284 (WWWK…QEMV), 285-317 (DTFL…FPGE), 318-351 (VTLL…DNTH), 352-385 (VEAI…GIYN), 386-419 (GQLF…AENE), 423-456 (ADVW…NNNH), and 457-490 (AEAY…APHM).

Part of BBSome complex, that contains BBS1, BBS2, BBS4, BBS5, BBS7, BBS8/TTC8, BBS9 and BBIP10. Interacts with PCM1. Interacts with CCDC28B. Interacts with PKD1. As to expression, widely expressed.

The protein resides in the cytoplasm. The protein localises to the cytoskeleton. It localises to the microtubule organizing center. Its subcellular location is the centrosome. It is found in the cell projection. The protein resides in the cilium membrane. The protein localises to the centriolar satellite. It localises to the cilium. Functionally, the BBSome complex is thought to function as a coat complex required for sorting of specific membrane proteins to the primary cilia. The BBSome complex is required for ciliogenesis but is dispensable for centriolar satellite function. This ciliogenic function is mediated in part by the Rab8 GDP/GTP exchange factor, which localizes to the basal body and contacts the BBSome. Rab8(GTP) enters the primary cilium and promotes extension of the ciliary membrane. Firstly the BBSome associates with the ciliary membrane and binds to RAB3IP/Rabin8, the guanosyl exchange factor (GEF) for Rab8 and then the Rab8-GTP localizes to the cilium and promotes docking and fusion of carrier vesicles to the base of the ciliary membrane. The BBSome complex, together with the LTZL1, controls SMO ciliary trafficking and contributes to the sonic hedgehog (SHH) pathway regulation. Required for proper BBSome complex assembly and its ciliary localization. This is Tetratricopeptide repeat protein 8 (TTC8) from Homo sapiens (Human).